A 266-amino-acid polypeptide reads, in one-letter code: MESEGPPESESSEFFSQQEEENEEEEAQEPEETGPKNPLLQPALTGDVEGLQKIFEDPENPHHEQAMQLLLEEDIVGRNLLYAACMAGQSDVIRALAKYGVNLNEKTTRGYTLLHCAAAWGRLETLKALVELDVDIEALNFREERARDVAARYSQTECVEFLDWADARLTLKKYIAKVSLAVTDTEKGSGKLLKEDKNTILSACRAKNEWLETHTEASINELFEQRQQLEDIVTPIFTKMTTPCQVKSAKSVTSHDQKRSQDDTSN.

2 stretches are compositionally biased toward acidic residues: residues 1–11 and 18–32; these read MESEGPPESES and QEEE…EPEE. The disordered stretch occupies residues 1-43; the sequence is MESEGPPESESSEFFSQQEEENEEEEAQEPEETGPKNPLLQPA. ANK repeat units follow at residues 76 to 105 and 109 to 138; these read VGRN…NLNE and RGYT…DIEA.

It is found in the cytoplasm. Its subcellular location is the midbody. The protein localises to the midbody ring. The protein resides in the cleavage furrow. Its function is as follows. May play a role during cell division. This Homo sapiens (Human) protein is Ankyrin repeat domain-containing protein 45.